The following is a 399-amino-acid chain: Argininosuccinate synthase (399 aa).

ATP contacts are provided by residues 10–18 and alanine 38; that span reads AYSGGVDTS. L-citrulline is bound at residue tyrosine 89. Glycine 119 contacts ATP. L-aspartate contacts are provided by threonine 121, asparagine 125, and aspartate 126. Asparagine 125 is a binding site for L-citrulline. The L-citrulline site is built by arginine 129, serine 177, serine 186, glutamate 262, and tyrosine 274.

Belongs to the argininosuccinate synthase family. Type 1 subfamily. In terms of assembly, homotetramer.

It localises to the cytoplasm. The catalysed reaction is L-citrulline + L-aspartate + ATP = 2-(N(omega)-L-arginino)succinate + AMP + diphosphate + H(+). It participates in amino-acid biosynthesis; L-arginine biosynthesis; L-arginine from L-ornithine and carbamoyl phosphate: step 2/3. In Acaryochloris marina (strain MBIC 11017), this protein is Argininosuccinate synthase.